A 178-amino-acid chain; its full sequence is Translation initiation factor IF-3 (178 aa).

The protein belongs to the IF-3 family. Monomer.

Its subcellular location is the cytoplasm. IF-3 binds to the 30S ribosomal subunit and shifts the equilibrium between 70S ribosomes and their 50S and 30S subunits in favor of the free subunits, thus enhancing the availability of 30S subunits on which protein synthesis initiation begins. The polypeptide is Translation initiation factor IF-3 (Ureaplasma parvum serovar 3 (strain ATCC 700970)).